The following is a 63-amino-acid chain: Cecropin-A1 (63 aa).

Positions 1 to 19 (MNFYNIFVFVALILAITIG) are cleaved as a signal peptide. Arginine 62 carries the post-translational modification Arginine amide.

Belongs to the cecropin family.

It is found in the secreted. In terms of biological role, cecropins have lytic and antibacterial activity against several Gram-positive and Gram-negative bacteria. This is Cecropin-A1 (CecA1) from Drosophila simulans (Fruit fly).